The primary structure comprises 111 residues: Large ribosomal subunit protein uL22 (111 aa).

The protein belongs to the universal ribosomal protein uL22 family. As to quaternary structure, part of the 50S ribosomal subunit.

Functionally, this protein binds specifically to 23S rRNA; its binding is stimulated by other ribosomal proteins, e.g. L4, L17, and L20. It is important during the early stages of 50S assembly. It makes multiple contacts with different domains of the 23S rRNA in the assembled 50S subunit and ribosome. The globular domain of the protein is located near the polypeptide exit tunnel on the outside of the subunit, while an extended beta-hairpin is found that lines the wall of the exit tunnel in the center of the 70S ribosome. In Xanthomonas euvesicatoria pv. vesicatoria (strain 85-10) (Xanthomonas campestris pv. vesicatoria), this protein is Large ribosomal subunit protein uL22.